Consider the following 358-residue polypeptide: Dynein axonemal assembly factor 10 (358 aa).

WD repeat units follow at residues 64 to 106, 116 to 155, 163 to 206, 208 to 250, 258 to 298, and 320 to 358; these read EKSK…SPVY, NAID…TPVV, ETKR…LRWE, NIRN…PSKG, AHKS…QRSK, and LSTQ…LNTV.

As to quaternary structure, interacts with PIH1D1; the interaction associates DNAAF10 with the R2TP complex. Interacts with several dynein axonemal assembly factors.

It is found in the dynein axonemal particle. Key assembly factor specifically required for the stability of axonemal dynein heavy chains in cytoplasm. This chain is Dynein axonemal assembly factor 10 (dnaaf10), found in Danio rerio (Zebrafish).